A 732-amino-acid polypeptide reads, in one-letter code: Catalase-peroxidase (732 aa).

The disordered stretch occupies residues 1-29; that stretch reads MTTESKCPFSGGGKPNTPRRGPSNQDWWP. Residues 96 to 223 constitute a cross-link (tryptophyl-tyrosyl-methioninium (Trp-Tyr) (with M-249)); sequence WHSAGTYRIG…LAAVQMGLIY (128 aa). His97 acts as the Proton acceptor in catalysis. The segment at residues 223–249 is a cross-link (tryptophyl-tyrosyl-methioninium (Tyr-Met) (with W-96)); the sequence is YVNPEGPDGNPDPVAAARDIRETFARM. His264 is a heme b binding site.

It belongs to the peroxidase family. Peroxidase/catalase subfamily. Homodimer or homotetramer. It depends on heme b as a cofactor. In terms of processing, formation of the three residue Trp-Tyr-Met cross-link is important for the catalase, but not the peroxidase activity of the enzyme.

The catalysed reaction is H2O2 + AH2 = A + 2 H2O. It catalyses the reaction 2 H2O2 = O2 + 2 H2O. Its function is as follows. Bifunctional enzyme with both catalase and broad-spectrum peroxidase activity. The polypeptide is Catalase-peroxidase (Serratia proteamaculans (strain 568)).